The primary structure comprises 452 residues: Nuclear distribution protein nudF 2 (452 aa).

Residues alanine 76–arginine 101 are a coiled coil. WD repeat units lie at residues serine 123–lysine 164, histidine 166–arginine 206, glycine 210–valine 250, serine 253–alanine 292, glycine 295–leucine 355, glycine 357–lysine 396, and alanine 401–arginine 449.

This sequence belongs to the WD repeat LIS1/nudF family. In terms of assembly, self-associates. Interacts with nudE and dynein.

It localises to the cytoplasm. The protein localises to the cytoskeleton. It is found in the spindle pole. Positively regulates the activity of the minus-end directed microtubule motor protein dynein. May enhance dynein-mediated microtubule sliding by targeting dynein to the microtubule plus end. Required for nuclear migration during vegetative growth as well as development. Required for retrograde early endosome (EE) transport from the hyphal tip. Required for localization of dynein to the mitotic spindle poles. Recruits additional proteins to the dynein complex at SPBs. This chain is Nuclear distribution protein nudF 2, found in Talaromyces marneffei (strain ATCC 18224 / CBS 334.59 / QM 7333) (Penicillium marneffei).